We begin with the raw amino-acid sequence, 177 residues long: Small ribosomal subunit protein uS5 (177 aa).

An S5 DRBM domain is found at 21–84 (LKEKMVSVNR…DEARQRMVRV (64 aa)).

Belongs to the universal ribosomal protein uS5 family. As to quaternary structure, part of the 30S ribosomal subunit. Contacts proteins S4 and S8.

Its function is as follows. With S4 and S12 plays an important role in translational accuracy. Located at the back of the 30S subunit body where it stabilizes the conformation of the head with respect to the body. This Nitrosomonas europaea (strain ATCC 19718 / CIP 103999 / KCTC 2705 / NBRC 14298) protein is Small ribosomal subunit protein uS5.